Consider the following 241-residue polypeptide: Cysteine-rich secretory protein 3 (241 aa).

The signal sequence occupies residues 1–19 (MALMLVLFFLAAVLPPSLL). The SCP domain maps to 44–170 (SKHNQLRRKV…PLRYFYVCRY (127 aa)). Asparagine 118, asparagine 132, and asparagine 175 each carry an N-linked (GlcNAc...) asparagine glycan. 5 disulfides stabilise this stretch: cysteine 194–cysteine 201, cysteine 197–cysteine 206, cysteine 210–cysteine 241, cysteine 219–cysteine 235, and cysteine 226–cysteine 239. Residues 210–241 (CQYKDMSFWCKRLEYVCKHPGLKKRCLATCQC) enclose the ShKT domain.

This sequence belongs to the CRISP family. As to quaternary structure, interacts with A1BG. Interacts with KNG1 isoform LMW. As to expression, expressed in submandibular gland.

Its subcellular location is the cytoplasmic vesicle. The protein localises to the secretory vesicle. In terms of biological role, this protein is supposed to help spermatozoa undergo functional maturation while they move from the testis to the ductus deferens. The sequence is that of Cysteine-rich secretory protein 3 (Crisp3) from Mus musculus (Mouse).